The chain runs to 216 residues: Protein Syd (216 aa).

It belongs to the Syd family.

It is found in the cell inner membrane. Interacts with the SecY protein in vivo. May bind preferentially to an uncomplexed state of SecY, thus functioning either as a chelating agent for excess SecY in the cell or as a regulatory factor that negatively controls the translocase function. This is Protein Syd from Shewanella sp. (strain ANA-3).